Reading from the N-terminus, the 425-residue chain is Adenylosuccinate synthetase (425 aa).

GTP contacts are provided by residues 12–18 and 40–42; these read GDEGKGK and GHT. The Proton acceptor role is filled by Asp-13. Residues Asp-13 and Gly-40 each coordinate Mg(2+). Residues 13 to 16, 38 to 41, Thr-127, Arg-141, Gln-222, Thr-237, and Arg-301 each bind IMP; these read DEGK and NAGH. The Proton donor role is filled by His-41. 297–303 contributes to the substrate binding site; that stretch reads AVTGRPR. Residues Arg-303, 329 to 331, and 411 to 413 each bind GTP; these read KID and SVG.

This sequence belongs to the adenylosuccinate synthetase family. As to quaternary structure, homodimer. Mg(2+) is required as a cofactor.

It localises to the cytoplasm. It carries out the reaction IMP + L-aspartate + GTP = N(6)-(1,2-dicarboxyethyl)-AMP + GDP + phosphate + 2 H(+). It functions in the pathway purine metabolism; AMP biosynthesis via de novo pathway; AMP from IMP: step 1/2. Plays an important role in the de novo pathway of purine nucleotide biosynthesis. Catalyzes the first committed step in the biosynthesis of AMP from IMP. This chain is Adenylosuccinate synthetase, found in Fusobacterium nucleatum subsp. nucleatum (strain ATCC 25586 / DSM 15643 / BCRC 10681 / CIP 101130 / JCM 8532 / KCTC 2640 / LMG 13131 / VPI 4355).